Consider the following 396-residue polypeptide: Elongation factor Tu-B (396 aa).

The tr-type G domain occupies 10 to 206 (KLHVNVGTIG…ALDTFIPDPT (197 aa)). Residues 19 to 26 (GHVDHGKT) form a G1 region. 19–26 (GHVDHGKT) is a GTP binding site. T26 serves as a coordination point for Mg(2+). A G2 region spans residues 60–64 (GITIS). The segment at 81–84 (DCPG) is G3. GTP contacts are provided by residues 81–85 (DCPGH) and 136–139 (NKAD). Residues 136-139 (NKAD) form a G4 region. The G5 stretch occupies residues 174-176 (SAR).

The protein belongs to the TRAFAC class translation factor GTPase superfamily. Classic translation factor GTPase family. EF-Tu/EF-1A subfamily. As to quaternary structure, monomer.

The protein localises to the cytoplasm. It catalyses the reaction GTP + H2O = GDP + phosphate + H(+). GTP hydrolase that promotes the GTP-dependent binding of aminoacyl-tRNA to the A-site of ribosomes during protein biosynthesis. The protein is Elongation factor Tu-B of Xanthomonas campestris pv. campestris (strain ATCC 33913 / DSM 3586 / NCPPB 528 / LMG 568 / P 25).